The following is a 59-amino-acid chain: Large ribosomal subunit protein uL30 (59 aa).

The protein belongs to the universal ribosomal protein uL30 family. Part of the 50S ribosomal subunit.

This Sodalis glossinidius (strain morsitans) protein is Large ribosomal subunit protein uL30.